The primary structure comprises 385 residues: Glucose-fructose oxidoreductase domain-containing protein 2 (385 aa).

The signal sequence occupies residues 1 to 25 (MKMLPGVGVFGTGSSARVLVPLLRA).

The protein belongs to the Gfo/Idh/MocA family.

Its subcellular location is the secreted. The protein resides in the extracellular space. The protein localises to the extracellular matrix. Its function is as follows. Promotes matrix assembly. This Homo sapiens (Human) protein is Glucose-fructose oxidoreductase domain-containing protein 2 (GFOD2).